The following is a 93-amino-acid chain: Small ribosomal subunit protein uS19c (93 aa).

Belongs to the universal ribosomal protein uS19 family.

It is found in the plastid. Its subcellular location is the chloroplast. In terms of biological role, protein S19 forms a complex with S13 that binds strongly to the 16S ribosomal RNA. In Zea mays (Maize), this protein is Small ribosomal subunit protein uS19c (rps19-A).